We begin with the raw amino-acid sequence, 393 residues long: Elongation factor Tu (393 aa).

Residues 10–203 (KPHVNIGTIG…AVDNYIPEPV (194 aa)) form the tr-type G domain. Residues 19–26 (GHVDHGKT) are G1. 19–26 (GHVDHGKT) serves as a coordination point for GTP. Position 26 (Thr-26) interacts with Mg(2+). The segment at 60-64 (GITIS) is G2. The tract at residues 81 to 84 (DCPG) is G3. GTP is bound by residues 81–85 (DCPGH) and 136–139 (NKVD). A G4 region spans residues 136–139 (NKVD). The segment at 173–175 (SAL) is G5.

The protein belongs to the TRAFAC class translation factor GTPase superfamily. Classic translation factor GTPase family. EF-Tu/EF-1A subfamily. As to quaternary structure, monomer.

It localises to the cytoplasm. It catalyses the reaction GTP + H2O = GDP + phosphate + H(+). GTP hydrolase that promotes the GTP-dependent binding of aminoacyl-tRNA to the A-site of ribosomes during protein biosynthesis. This Chlorobium phaeovibrioides (strain DSM 265 / 1930) (Prosthecochloris vibrioformis (strain DSM 265)) protein is Elongation factor Tu.